The following is a 1237-amino-acid chain: Mediator of RNA polymerase II transcription subunit 5 (1237 aa).

Disordered stretches follow at residues 1109-1131 (DDEP…TSNA) and 1202-1226 (HGAQ…ADSG). Positions 1119 to 1131 (HAAANATSHTSNA) are enriched in low complexity.

It belongs to the Mediator complex subunit 5 family. As to quaternary structure, component of the Mediator complex.

The protein localises to the nucleus. Its function is as follows. Component of the Mediator complex, a coactivator involved in the regulated transcription of nearly all RNA polymerase II-dependent genes. Mediator functions as a bridge to convey information from gene-specific regulatory proteins to the basal RNA polymerase II transcription machinery. Mediator is recruited to promoters by direct interactions with regulatory proteins and serves as a scaffold for the assembly of a functional preinitiation complex with RNA polymerase II and the general transcription factors. The polypeptide is Mediator of RNA polymerase II transcription subunit 5 (NUT1) (Mycosarcoma maydis (Corn smut fungus)).